Consider the following 449-residue polypeptide: Phosphoglucosamine mutase (449 aa).

Ser-100 functions as the Phosphoserine intermediate in the catalytic mechanism. 4 residues coordinate Mg(2+): Ser-100, Asp-241, Asp-243, and Asp-245. The residue at position 100 (Ser-100) is a Phosphoserine.

The protein belongs to the phosphohexose mutase family. Requires Mg(2+) as cofactor. In terms of processing, activated by phosphorylation.

It catalyses the reaction alpha-D-glucosamine 1-phosphate = D-glucosamine 6-phosphate. Catalyzes the conversion of glucosamine-6-phosphate to glucosamine-1-phosphate. In Clostridium botulinum (strain ATCC 19397 / Type A), this protein is Phosphoglucosamine mutase.